A 719-amino-acid polypeptide reads, in one-letter code: MFTKHSVEIDWGGRPLKLETGKIARQADGAVVATYGETVVLATVVAAKAPRDGVDFLPLTVDYQEKAYAAGRIPGGYFKREGRPTEKETLVSRLIDRPIRPLFVDSWRNETQVIVTVLSHDMENDPDIVALVAASAALTLSGVPFKGPIGAARVGFANDEYILNPTLDEMADTQLDLVVAGTSDAVLMVESEAKELNEDIMLGAVMFGHRHFQPVINAIIELAEKAAKDPRDVAIIDNSAIEKEMLGIAEQDLRKAYAIAIKQERYAAVGAVKEKVMAYFFPEGQEPKYDKLRVAAVFKELEAKIVRWNILDTGKRIDGRDAKTVRNIVCEVGVLPRAHGSALFTRGETQALVVTTLGTGEDEQYIDALSGTYKETFLLHYNFPPYSVGETGRLGGTKRREIGHGKLAWRAIHPVLPPHHEFPYTTRVVSEVTESNGSSSMATVCGSSLALMDAGVPLKRPTAGIAMGLILEGSRFAVLSDILGDEDHLGDMDFKVAGTESGITSLQMDIKIEGITEEIMRVALGQAREGRIHILGEMSKALTAARAELGEYAPRIETFKIATDKIREVIGTGGKVIREIVEKTGAKVNIEDDGTVKVASSDGEAMKAAIKWIKSIASDPEVGQIYDGTVVKVMEFGAFVNFFGTRDGLVHISQLADKRVQKTTDVVKEGDKVKVKLLGFDDRGKTRLSMKVVDQTTGEDLEAKQKDAPAEAPREAAGE.

Mg(2+) contacts are provided by D487 and D493. Residues 554-613 enclose the KH domain; that stretch reads PRIETFKIATDKIREVIGTGGKVIREIVEKTGAKVNIEDDGTVKVASSDGEAMKAAIKWI. Residues 623 to 691 enclose the S1 motif domain; the sequence is GQIYDGTVVK…DRGKTRLSMK (69 aa). Residues 691 to 719 form a disordered region; sequence KVVDQTTGEDLEAKQKDAPAEAPREAAGE. The segment covering 701–719 has biased composition (basic and acidic residues); sequence LEAKQKDAPAEAPREAAGE.

This sequence belongs to the polyribonucleotide nucleotidyltransferase family. Mg(2+) is required as a cofactor.

Its subcellular location is the cytoplasm. It catalyses the reaction RNA(n+1) + phosphate = RNA(n) + a ribonucleoside 5'-diphosphate. Its function is as follows. Involved in mRNA degradation. Catalyzes the phosphorolysis of single-stranded polyribonucleotides processively in the 3'- to 5'-direction. In Bradyrhizobium sp. (strain ORS 278), this protein is Polyribonucleotide nucleotidyltransferase.